Reading from the N-terminus, the 476-residue chain is Ribosomal large subunit pseudouridine synthase B (476 aa).

An S4 RNA-binding domain is found at 27 to 96; sequence ERLHKVLAQA…PARVLIYNKP (70 aa). The active-site Nucleophile is the D131. The disordered stretch occupies residues 299–476; the sequence is NRNDNNKHAY…YNRNRGPRYP (178 aa). Over residues 314–333 the composition is skewed to basic and acidic residues; the sequence is TADESRELRRFDTLRDDRGR. The segment covering 354 to 363 has biased composition (basic residues); that stretch reads QAHKPFKQYK. Composition is skewed to polar residues over residues 371 to 380 and 408 to 424; these read SEGSPATFQS and KSPNPNTRNTPGQQTRK.

It belongs to the pseudouridine synthase RsuA family.

The enzyme catalyses uridine(2605) in 23S rRNA = pseudouridine(2605) in 23S rRNA. Responsible for synthesis of pseudouridine from uracil-2605 in 23S ribosomal RNA. This is Ribosomal large subunit pseudouridine synthase B (rluB) from Xylella fastidiosa (strain 9a5c).